The following is a 70-amino-acid chain: UPF0337 protein BT9727_3385 (70 aa).

It belongs to the UPF0337 (CsbD) family.

The sequence is that of UPF0337 protein BT9727_3385 from Bacillus thuringiensis subsp. konkukian (strain 97-27).